A 513-amino-acid polypeptide reads, in one-letter code: Light-independent protochlorophyllide reductase subunit B (513 aa).

Residue aspartate 36 participates in [4Fe-4S] cluster binding. Residue aspartate 274 is the Proton donor of the active site. 409–410 (GL) is a binding site for substrate. Positions 426 to 457 (DAAGPSHHGGHSPKPQAAEPAPQAAPQPENTG) are disordered. Residues 440–454 (PQAAEPAPQAAPQPE) are compositionally biased toward low complexity.

This sequence belongs to the ChlB/BchB/BchZ family. Protochlorophyllide reductase is composed of three subunits; BchL, BchN and BchB. Forms a heterotetramer of two BchB and two BchN subunits. It depends on [4Fe-4S] cluster as a cofactor.

The enzyme catalyses chlorophyllide a + oxidized 2[4Fe-4S]-[ferredoxin] + 2 ADP + 2 phosphate = protochlorophyllide a + reduced 2[4Fe-4S]-[ferredoxin] + 2 ATP + 2 H2O. It participates in porphyrin-containing compound metabolism; bacteriochlorophyll biosynthesis (light-independent). Its function is as follows. Component of the dark-operative protochlorophyllide reductase (DPOR) that uses Mg-ATP and reduced ferredoxin to reduce ring D of protochlorophyllide (Pchlide) to form chlorophyllide a (Chlide). This reaction is light-independent. The NB-protein (BchN-BchB) is the catalytic component of the complex. This is Light-independent protochlorophyllide reductase subunit B from Roseobacter denitrificans (strain ATCC 33942 / OCh 114) (Erythrobacter sp. (strain OCh 114)).